A 756-amino-acid chain; its full sequence is Glutathione biosynthesis bifunctional protein GshAB (756 aa).

Residues 1-338 (MNYRELMQKK…TGDIFNEQVA (338 aa)) are glutamate--cysteine ligase. The ATP-grasp domain occupies 493-751 (KKILSAAGFH…LTMDVLKLLY (259 aa)). ATP is bound at residue 520-578 (LRYANKAFVVKPKSTNYGLGITIFKEGASLEDFTEALRIAFKEDTAVLIEEFLPGTEYR). Residues aspartate 700, glutamate 721, and asparagine 723 each contribute to the Mg(2+) site. Mn(2+) is bound by residues aspartate 700, glutamate 721, and asparagine 723.

The protein in the N-terminal section; belongs to the glutamate--cysteine ligase type 1 family. Type 2 subfamily. In terms of assembly, monomer. Mg(2+) is required as a cofactor. It depends on Mn(2+) as a cofactor.

The enzyme catalyses L-cysteine + L-glutamate + ATP = gamma-L-glutamyl-L-cysteine + ADP + phosphate + H(+). It carries out the reaction gamma-L-glutamyl-L-cysteine + glycine + ATP = glutathione + ADP + phosphate + H(+). It participates in sulfur metabolism; glutathione biosynthesis; glutathione from L-cysteine and L-glutamate: step 1/2. Its pathway is sulfur metabolism; glutathione biosynthesis; glutathione from L-cysteine and L-glutamate: step 2/2. Its function is as follows. Synthesizes glutathione from L-glutamate and L-cysteine via gamma-L-glutamyl-L-cysteine. This Enterococcus faecalis (strain ATCC 700802 / V583) protein is Glutathione biosynthesis bifunctional protein GshAB.